The following is a 477-amino-acid chain: Probable cytosolic Fe-S cluster assembly factor GM20417 (477 aa).

Residues Cys-23, Cys-68, Cys-71, Cys-74, Cys-187, Cys-243, Cys-395, and Cys-399 each contribute to the [4Fe-4S] cluster site.

This sequence belongs to the NARF family.

Functionally, component of the cytosolic iron-sulfur (Fe/S) protein assembly machinery. Required for maturation of extramitochondrial Fe/S proteins. This chain is Probable cytosolic Fe-S cluster assembly factor GM20417, found in Drosophila sechellia (Fruit fly).